The primary structure comprises 293 residues: Mimecan (293 aa).

The signal sequence occupies residues Met1–Pro19. Asn60 carries N-linked (GlcNAc...) asparagine glycosylation. LRR repeat units follow at residues Glu107–Ile126, Lys127–Ile150, Glu151–Leu174, Val175–Ile194, Lys195–Leu220, Glu221–Ile241, and Thr242–Ile272. Asn240 and Asn253 each carry an N-linked (GlcNAc...) asparagine glycan. Cys250 and Cys283 are oxidised to a cystine.

The protein belongs to the small leucine-rich proteoglycan (SLRP) family. SLRP class III subfamily. Post-translationally, contains keratan sulfate. In terms of tissue distribution, expressed in many tissues.

Its subcellular location is the secreted. The protein localises to the extracellular space. It localises to the extracellular matrix. In terms of biological role, induces bone formation in conjunction with TGF-beta-1 or TGF-beta-2. The sequence is that of Mimecan (OGN) from Coturnix japonica (Japanese quail).